The sequence spans 404 residues: Multidrug resistance protein MdtG (404 aa).

A run of 11 helical transmembrane segments spans residues 19 to 39 (LGCFLTGAAFSLVMPFLPLYV), 56 to 76 (LVFSITFLFSAIASPFWGGLA), 90 to 110 (LGMAIVMLLMGMAQNIWQFLI), 113 to 133 (ALLGLLGGFIPNANALIATQV), 144 to 164 (TLSTGGVSGALLGPLAGGLLA), 171 to 191 (PVFFITASVLFICFLLTFFFI), 222 to 242 (LFVTTLIIQVATGSIAPILTL), 254 to 274 (IAFISGMIASVPGVAALLSAP), 288 to 308 (ILIVALIISVLLLIPMSFVQT), 317 to 337 (FLLGAADGALLPAVQTLLVYN), and 376 to 396 (AVFCVTAGVVLFNAIYSWNSL).

The protein belongs to the major facilitator superfamily. DHA1 family. MdtG (TC 2.A.1.2.20) subfamily.

The protein resides in the cell inner membrane. The polypeptide is Multidrug resistance protein MdtG (Salmonella schwarzengrund (strain CVM19633)).